A 584-amino-acid polypeptide reads, in one-letter code: ATP synthase subunit alpha, mitochondrial (584 aa).

The transit peptide at 1 to 24 (MRRFGSKFASGLASRCALACPLAS) directs the protein to the mitochondrion. Residues 207 to 214 (DRQTGKTS) and Q464 each bind ATP.

Belongs to the ATPase alpha/beta chains family. As to quaternary structure, F-type ATPases have 2 components, F(1) - the catalytic core - and F(o) - the membrane proton channel. F(1) has five subunits: alpha(3), beta(3), gamma(1), delta(1), epsilon(1), plus the additional subunit P18 (Tb427.05.1710) that is not present in F(1)F(o) ATP synthase from metazoa. Subunit P18 (Tb927.5.1710) interacts with the alpha subunit with a 1:1 stoichiometry; the interaction is direct. Subunit gamma is part of the central stalk. F(o) has three main subunits: a, b and c. The trypanosomal ATPase complex contains additional subunits that are not present in the F(1)F(o) ATP synthase from metazoa.

The protein localises to the mitochondrion. It localises to the mitochondrion inner membrane. Mitochondrial membrane ATP synthase (F(1)F(o) ATP synthase) produces ATP from ADP in the presence of a proton gradient across the membrane which is generated by electron transport complexes of the respiratory chain. F-type ATPases consist of two structural domains, F(1) - containing the extramembraneous catalytic core, and F(o) - containing the membrane proton channel, linked together by a central stalk and a peripheral stalk. During catalysis, ATP synthesis in the catalytic domain of F(1) is coupled via a rotary mechanism of the central stalk subunits to proton translocation. Subunits alpha and beta form the catalytic core in F(1). Rotation of the central stalk against the surrounding alpha(3)beta(3) subunits leads to hydrolysis of ATP in three separate catalytic sites on the beta subunits. Subunit alpha does not bear the catalytic high-affinity ATP-binding sites. Contrary to the procyclic, insect form that requires F(1)F(o) ATP synthase for ATP synthesis, the bloodstream form relies on ATP hydrolysis by F(1)F(o) ATP synthase to maintain its mitochondrial membrane potential. The chain is ATP synthase subunit alpha, mitochondrial from Trypanosoma brucei brucei.